A 571-amino-acid polypeptide reads, in one-letter code: Polypeptide N-acetylgalactosaminyltransferase 2 (571 aa).

Over 1–6 the chain is Cytoplasmic; sequence MRRRSR. The helical; Signal-anchor for type II membrane protein transmembrane segment at 7–24 threads the bilayer; the sequence is MLLCFAFLWVLGIAYYMY. The Lumenal segment spans residues 25 to 571; that stretch reads SGGGSALAGG…QWKFTLNLQQ (547 aa). An O-linked (Xyl...) (chondroitin sulfate) serine glycan is attached at Ser-29. Basic and acidic residues predominate over residues 53–66; the sequence is KKDLHHSNGEEKAQ. Residues 53-74 form a disordered region; it reads KKDLHHSNGEEKAQSMETLPPG. Intrachain disulfides connect Cys-126–Cys-354, Cys-345–Cys-423, Cys-456–Cys-473, and Cys-496–Cys-513. The segment at 135 to 240 is catalytic subdomain A; sequence LPATSVVITF…EHWLEPLLER (106 aa). Positions 143, 176, and 201 each coordinate substrate. Asp-224 provides a ligand contact to Mn(2+). Residue Ser-225 coordinates substrate. His-226 lines the Mn(2+) pocket. Residues 300 to 362 are catalytic subdomain B; the sequence is PIKTPMIAGG…PCSRVGHVFR (63 aa). Substrate is bound at residue Trp-331. A Mn(2+)-binding site is contributed by His-359. The substrate site is built by Arg-362, His-365, and Tyr-367. The 124-residue stretch at 443-566 folds into the Ricin B-type lectin domain; it reads QDIAFGALQQ…PALSQQWKFT (124 aa). Ser-536 is modified (phosphoserine). Residues Cys-539 and Cys-555 are joined by a disulfide bond.

This sequence belongs to the glycosyltransferase 2 family. GalNAc-T subfamily. Requires Mn(2+) as cofactor. As to expression, detected in urine (at protein level). Widely expressed.

It localises to the golgi apparatus. The protein localises to the golgi stack membrane. It is found in the secreted. The catalysed reaction is L-seryl-[protein] + UDP-N-acetyl-alpha-D-galactosamine = a 3-O-[N-acetyl-alpha-D-galactosaminyl]-L-seryl-[protein] + UDP + H(+). The enzyme catalyses L-threonyl-[protein] + UDP-N-acetyl-alpha-D-galactosamine = a 3-O-[N-acetyl-alpha-D-galactosaminyl]-L-threonyl-[protein] + UDP + H(+). The protein operates within protein modification; protein glycosylation. Its function is as follows. Catalyzes the initial reaction in O-linked oligosaccharide biosynthesis, the transfer of an N-acetyl-D-galactosamine residue to a serine or threonine residue on the protein receptor. Has a broad spectrum of substrates for peptides such as EA2, Muc5AC, Muc1a, Muc1b. Probably involved in O-linked glycosylation of the immunoglobulin A1 (IgA1) hinge region. Involved in O-linked glycosylation of APOC-III, ANGPTL3 and PLTP. It participates in the regulation of HDL-C metabolism. The polypeptide is Polypeptide N-acetylgalactosaminyltransferase 2 (GALNT2) (Homo sapiens (Human)).